The primary structure comprises 74 residues: Large ribosomal subunit protein bL31 (74 aa).

It belongs to the bacterial ribosomal protein bL31 family. Type A subfamily. In terms of assembly, part of the 50S ribosomal subunit.

Binds the 23S rRNA. The chain is Large ribosomal subunit protein bL31 from Synechococcus sp. (strain JA-2-3B'a(2-13)) (Cyanobacteria bacterium Yellowstone B-Prime).